The sequence spans 716 residues: Probable basic-leucine zipper transcription factor O (716 aa).

Residues 20 to 142 adopt a coiled-coil conformation; it reads LLDDFSQLQQ…YQQRQQQYQD (123 aa). Residues 173 to 233 form a disordered region; it reads SINYNMNNNN…NNKTTDNINN (61 aa). The 64-residue stretch at 381–444 folds into the bZIP domain; it reads KSTESIKKMN…SVDLMKPSND (64 aa). The segment at 387 to 403 is basic motif; sequence KKMNQNKASRNYRQKKK. The interval 406–413 is leucine-zipper; the sequence is IKEIEDKL.

It belongs to the bZIP family.

Its subcellular location is the nucleus. Probable transcriptional regulator. In Dictyostelium discoideum (Social amoeba), this protein is Probable basic-leucine zipper transcription factor O (bzpO).